The sequence spans 127 residues: DNA-directed RNA polymerases I, II, and III subunit RPABC2 (127 aa).

A compositionally biased stretch (acidic residues) spans 1-34 (MSDNEDNFDGDDFDDVEEDEGLDDLENAEEEGQE). A disordered region spans residues 1–53 (MSDNEDNFDGDDFDDVEEDEGLDDLENAEEEGQENVEILPSGERPQANQKRIT). An N-acetylserine modification is found at S2. S2 carries the post-translational modification Phosphoserine; by CK2.

Belongs to the archaeal Rpo6/eukaryotic RPB6 RNA polymerase subunit family. As to quaternary structure, component of the RNA polymerase I (Pol I), RNA polymerase II (Pol II) and RNA polymerase III (Pol III) complexes consisting of at least 13, 12 and 17 subunits, respectively. Pol I complex consists of a ten-subunit catalytic core composed of POLR1A/RPA1, POLR1B/RPA2, POLR1C/RPAC1, POLR1D/RPAC2, POLR1H/RPA12, POLR2E/RPABC1, POLR2F/RPABC2, POLR2H/RPABC3, POLR2K/RPABC4 and POLR2L/RPABC5; a mobile stalk subunit POLR1F/RPA43 protruding from the core and additional subunits homologous to general transcription factors POLR1E/RPA49 and POLR1G/RPA34. Part of Pol I pre-initiation complex (PIC), in which Pol I core assembles with RRN3 and promoter-bound UTBF and SL1/TIF-IB complex. Pol II complex contains a ten-subunit catalytic core composed of POLR2A/RPB1, POLR2B/RPB2, POLR2C/RPB3, POLR2I/RPB9, POLR2J/RPB11, POLR2E/RPABC1, POLR2F/RPABC2, POLR2H/RPABC3, POLR2K/RPABC4 and POLR2L/RPABC5 and a mobile stalk composed of two subunits POLR2D/RPB4 and POLR2G/RPB7. Part of Pol II(G) complex, in which Pol II core associates with an additional subunit POLR2M; unlike conventional Pol II, Pol II(G) functions as a transcriptional repressor. Part of TBP-based Pol II pre-initiation complex (PIC), in which Pol II core assembles with general transcription factors and other specific initiation factors including GTF2E1, GTF2E2, GTF2F1, GTF2F2, TCEA1, ERCC2, ERCC3, GTF2H2, GTF2H3, GTF2H4, GTF2H5, GTF2A1, GTF2A2, GTF2B and TBP; this large multi-subunit PIC complex mediates DNA unwinding and targets Pol II core to the transcription start site where the first phosphodiester bond forms. Pol III complex consists of a ten-subunit catalytic core composed of POLR3A/RPC1, POLR3B/RPC2, POLR1C/RPAC1, POLR1D/RPAC2, POLR3K/RPC10, POLR2E/RPABC1, POLR2F/RPABC2, POLR2H/RPABC3, POLR2K/RPABC4 and POLR2L/RPABC5; a mobile stalk composed of two subunits POLR3H/RPC8 and CRCP/RPC9, protruding from the core and functioning primarily in transcription initiation; and additional subunits homologous to general transcription factors of the RNA polymerase II machinery, POLR3C/RPC3-POLR3F/RPC6-POLR3G/RPC7 heterotrimer required for transcription initiation and POLR3D/RPC4-POLR3E/RPC5 heterodimer involved in both transcription initiation and termination.

It localises to the nucleus. Its subcellular location is the nucleolus. Its function is as follows. DNA-dependent RNA polymerase catalyzes the transcription of DNA into RNA using the four ribonucleoside triphosphates as substrates. Common component of RNA polymerases I, II, and III which synthesize ribosomal RNA precursors, mRNA precursors and many functional non-coding RNAs, and small RNAs, such as 5S rRNA and tRNAs, respectively. Pol II is the central component of the basal RNA polymerase II transcription machinery. Pols are composed of mobile elements that move relative to each other. In Pol II, POLR2F/RPABC2 is part of the clamp element and together with parts of POLR2A/RPB1 and POLR2B/RPB2 forms a pocket to which the POLR2D/RPB4-POLR2G/RPB7 subcomplex binds. This Mus musculus (Mouse) protein is DNA-directed RNA polymerases I, II, and III subunit RPABC2.